The following is a 235-amino-acid chain: Tetraspanin-8 (235 aa).

The Cytoplasmic segment spans residues 1–12 (MAGVSSCLKYSM). A helical transmembrane segment spans residues 13–33 (FFFNFLFWVCGTLILGLAIWV). Residues 34-52 (RVSKDGKEIITSGDSSTNP) lie on the Extracellular side of the membrane. Residues 53-73 (FIAVNILIAVGSIIMVLGFLG) traverse the membrane as a helical segment. Topologically, residues 74 to 84 (CCGAVKESRCM) are cytoplasmic. Residues 85–105 (LLLFFIGLLLILILQVAAGIL) form a helical membrane-spanning segment. At 106–203 (GAAFKPEYNR…SLIKDLFEKN (98 aa)) the chain is on the extracellular side. A glycan (N-linked (GlcNAc...) asparagine) is linked at asparagine 118. Residues 204–224 (IIIVIGIAFGLAVIEILGLVF) traverse the membrane as a helical segment. Residues 225-235 (SMVLYCQIGSK) lie on the Cytoplasmic side of the membrane.

Belongs to the tetraspanin (TM4SF) family. Forms homooligomers. Interacts with MEP1B. Interacts with integrin alpha3/ITGA3. Interacts with RICTOR and MTOR. Interacts with ADAM17. Interacts with ECE1.

The protein resides in the cell membrane. In terms of biological role, structural component of specialized membrane microdomains known as tetraspanin-enriched microdomains (TERMs), which act as platforms for receptor clustering and signaling. Participates thereby in diverse biological functions such as cell signal transduction, migration and protein trafficking. Promotes ADAM17-mediated TNF-alpha processing through recruitment of ADAM17 to tetraspanin-enriched micro-domains (TEMs). Forms a complex with RICTOR and integrin alpha3/ITGA3 to mediate mTORC2 activation and AKT1 phosphorylation leading to cell migration. Reduces apoptosis and autophagy induced by high glucose levels through forming a complex with mTOR and RICTOR. Contributes to the maintenance of intestinal epithelial barrier and plays a role in the regulation of intestine inflammation by switching interferon gamma receptor 1/IFNGR1 from clathrin-dependent to lipid raft-dependent endocytosis route to limit STAT1 activation magnitude and duration. Acts as a modulator of the endothelin axis by associating with endothelin converting enzyme ECE1 and regulating its activity of conversion of the endothelin-1 precursor to endothelin. The protein is Tetraspanin-8 (Tspan8) of Mus musculus (Mouse).